A 96-amino-acid chain; its full sequence is Co-chaperonin GroES 2 (96 aa).

This sequence belongs to the GroES chaperonin family. As to quaternary structure, heptamer of 7 subunits arranged in a ring. Interacts with the chaperonin GroEL.

It localises to the cytoplasm. In terms of biological role, together with the chaperonin GroEL, plays an essential role in assisting protein folding. The GroEL-GroES system forms a nano-cage that allows encapsulation of the non-native substrate proteins and provides a physical environment optimized to promote and accelerate protein folding. GroES binds to the apical surface of the GroEL ring, thereby capping the opening of the GroEL channel. The sequence is that of Co-chaperonin GroES 2 from Vibrio cholerae serotype O1 (strain ATCC 39315 / El Tor Inaba N16961).